The chain runs to 193 residues: Thioredoxin reductase-like selenoprotein T1a (193 aa).

The N-terminal stretch at 1 to 21 (MRWLPFSALLLWALCLHSASA) is a signal peptide. The cysteinyl-selenocysteine (Cys-Sec) cross-link spans 44 to 47 (CVSU). Position 47 (selenocysteine 47) is a non-standard amino acid, selenocysteine. The helical transmembrane segment at 83–101 (IASFLSMFKLLLIGVIILG) threads the bilayer.

The protein belongs to the SelWTH family. Selenoprotein T subfamily. In terms of processing, may contain a selenide-sulfide bond between Cys-44 and Sec-47. This bond is speculated to serve as redox-active pair. As to expression, expressed in embryonic olfactory vesicles and the photoreceptor cell layer of the embryonic retina. Low level in embryonic epiphysis.

It localises to the endoplasmic reticulum membrane. It carries out the reaction [thioredoxin]-dithiol + NADP(+) = [thioredoxin]-disulfide + NADPH + H(+). In terms of biological role, selenoprotein with thioredoxin reductase-like oxidoreductase activity. This Danio rerio (Zebrafish) protein is Thioredoxin reductase-like selenoprotein T1a.